A 499-amino-acid chain; its full sequence is Increased recombination centers protein 15 (499 aa).

47–56 (DQRASLGGAY) lines the FAD pocket.

It belongs to the class-I pyridine nucleotide-disulfide oxidoreductase family.

The protein resides in the cytoplasm. The polypeptide is Increased recombination centers protein 15 (IRC15) (Saccharomyces cerevisiae (strain ATCC 204508 / S288c) (Baker's yeast)).